The chain runs to 270 residues: tRNA 2-(methylsulfanyl)-N(6)-isopentenyladenosine(37) hydroxylase (270 aa).

Glu-59, Glu-137, His-140, Glu-190, Glu-219, and His-222 together coordinate Fe cation.

The protein belongs to the MiaE family. In terms of assembly, monomer. Fe cation is required as a cofactor.

The catalysed reaction is 2-methylsulfanyl-N(6)-dimethylallyladenosine(37) in tRNA + AH2 + O2 = N(6)-[(2E)-4-hydroxy-3-methylbut-2-en-1-yl]-2-(methylsulfanyl)adenosine(37) in tRNA + A + H2O. Its pathway is tRNA modification; 2-methylthio-N-6-(cis-hydroxy)isopentenyl adenosine-tRNA biosynthesis. Its function is as follows. Involved in specific tRNA modification. Catalyzes the oxygen-dependent hydroxylation of 2-methylthio-N-6-isopentenyl adenosine (ms2i6A) to produce 2-methylthio-N-6-(cis-hydroxy)isopentenyl adenosine (ms2io6A) at position 37 in tRNAs. Can also use N6-(dimethylallyl)adenosine (i6A) as substrate, with lower efficiency. The presence of the hydroxyl group on the tRNA may regulate the ability of S.typhimurium to grow on the citric acid cycle (CAC) intermediates succinate, fumarate and malate. The chain is tRNA 2-(methylsulfanyl)-N(6)-isopentenyladenosine(37) hydroxylase from Salmonella typhimurium (strain LT2 / SGSC1412 / ATCC 700720).